The primary structure comprises 132 residues: Small ribosomal subunit protein uS8 (132 aa).

Belongs to the universal ribosomal protein uS8 family. Part of the 30S ribosomal subunit. Contacts proteins S5 and S12.

Functionally, one of the primary rRNA binding proteins, it binds directly to 16S rRNA central domain where it helps coordinate assembly of the platform of the 30S subunit. The chain is Small ribosomal subunit protein uS8 from Francisella tularensis subsp. holarctica (strain FTNF002-00 / FTA).